Consider the following 152-residue polypeptide: Deoxyuridine 5'-triphosphate nucleotidohydrolase (152 aa).

Residues 71-73 (RSG), Asn84, 88-90 (LID), and Met98 each bind substrate.

Belongs to the dUTPase family. Requires Mg(2+) as cofactor.

The catalysed reaction is dUTP + H2O = dUMP + diphosphate + H(+). It functions in the pathway pyrimidine metabolism; dUMP biosynthesis; dUMP from dCTP (dUTP route): step 2/2. Its function is as follows. This enzyme is involved in nucleotide metabolism: it produces dUMP, the immediate precursor of thymidine nucleotides and it decreases the intracellular concentration of dUTP so that uracil cannot be incorporated into DNA. The chain is Deoxyuridine 5'-triphosphate nucleotidohydrolase from Klebsiella pneumoniae (strain 342).